The primary structure comprises 322 residues: Extracellular metalloprotease AFUA_1G07730 (322 aa).

The signal sequence occupies residues 1–22; it reads MLPFNSCVYVLLIISLMSNCRA. N-linked (GlcNAc...) asparagine glycans are attached at residues Asn-123 and Asn-197. His-233 is a Zn(2+) binding site. The active site involves Glu-234. Position 237 (His-237) interacts with Zn(2+). Cys-272 and Cys-299 are oxidised to a cystine.

Belongs to the peptidase M43B family.

The protein resides in the secreted. Secreted metalloproteinase that allows assimilation of proteinaceous substrates. Plays a pivotal role as a pathogenicity determinant during infections and contributes to the ability of the pathogen to persist within the mammalian host. The protein is Extracellular metalloprotease AFUA_1G07730 of Aspergillus fumigatus (strain ATCC MYA-4609 / CBS 101355 / FGSC A1100 / Af293) (Neosartorya fumigata).